The primary structure comprises 213 residues: Imidazole glycerol phosphate synthase subunit HisH (213 aa).

One can recognise a Glutamine amidotransferase type-1 domain in the interval 4–211 (NLGVIDYGMG…LHWLHQGAEP (208 aa)). The active-site Nucleophile is Cys82. Residues His186 and Glu188 contribute to the active site.

As to quaternary structure, heterodimer of HisH and HisF.

Its subcellular location is the cytoplasm. The catalysed reaction is 5-[(5-phospho-1-deoxy-D-ribulos-1-ylimino)methylamino]-1-(5-phospho-beta-D-ribosyl)imidazole-4-carboxamide + L-glutamine = D-erythro-1-(imidazol-4-yl)glycerol 3-phosphate + 5-amino-1-(5-phospho-beta-D-ribosyl)imidazole-4-carboxamide + L-glutamate + H(+). It catalyses the reaction L-glutamine + H2O = L-glutamate + NH4(+). It functions in the pathway amino-acid biosynthesis; L-histidine biosynthesis; L-histidine from 5-phospho-alpha-D-ribose 1-diphosphate: step 5/9. In terms of biological role, IGPS catalyzes the conversion of PRFAR and glutamine to IGP, AICAR and glutamate. The HisH subunit catalyzes the hydrolysis of glutamine to glutamate and ammonia as part of the synthesis of IGP and AICAR. The resulting ammonia molecule is channeled to the active site of HisF. The sequence is that of Imidazole glycerol phosphate synthase subunit HisH from Synechococcus sp. (strain CC9902).